The sequence spans 264 residues: Small ribosomal subunit protein eS1B (264 aa).

The tract at residues 233–264 is disordered; it reads GEGGGSGKPAADETGAKVERADGYEPPVQESV. Positions 242–255 are enriched in basic and acidic residues; the sequence is AADETGAKVERADG.

The protein belongs to the eukaryotic ribosomal protein eS1 family. As to quaternary structure, component of the small ribosomal subunit. Mature ribosomes consist of a small (40S) and a large (60S) subunit. The 40S subunit contains about 33 different proteins and 1 molecule of RNA (18S). The 60S subunit contains about 49 different proteins and 3 molecules of RNA (28S, 5.8S and 5S). Part of the small subunit (SSU) processome, composed of more than 70 proteins and the RNA chaperone small nucleolar RNA (snoRNA) U3.

It is found in the cytoplasm. The protein resides in the nucleus. Its subcellular location is the nucleolus. Its function is as follows. Component of the small ribosomal subunit. The ribosome is a large ribonucleoprotein complex responsible for the synthesis of proteins in the cell. Part of the small subunit (SSU) processome, first precursor of the small eukaryotic ribosomal subunit. During the assembly of the SSU processome in the nucleolus, many ribosome biogenesis factors, an RNA chaperone and ribosomal proteins associate with the nascent pre-rRNA and work in concert to generate RNA folding, modifications, rearrangements and cleavage as well as targeted degradation of pre-ribosomal RNA by the RNA exosome. May play a role during erythropoiesis. This is Small ribosomal subunit protein eS1B (rps3a-b) from Xenopus laevis (African clawed frog).